Here is a 411-residue protein sequence, read N- to C-terminus: Serine hydroxymethyltransferase (411 aa).

120–122 (GHL) lines the (6S)-5,6,7,8-tetrahydrofolate pocket. Lys225 carries the N6-(pyridoxal phosphate)lysine modification. Residue 350 to 352 (SPF) coordinates (6S)-5,6,7,8-tetrahydrofolate.

Belongs to the SHMT family. Homodimer. Pyridoxal 5'-phosphate serves as cofactor.

It is found in the cytoplasm. It carries out the reaction (6R)-5,10-methylene-5,6,7,8-tetrahydrofolate + glycine + H2O = (6S)-5,6,7,8-tetrahydrofolate + L-serine. Its pathway is one-carbon metabolism; tetrahydrofolate interconversion. The protein operates within amino-acid biosynthesis; glycine biosynthesis; glycine from L-serine: step 1/1. Catalyzes the reversible interconversion of serine and glycine with tetrahydrofolate (THF) serving as the one-carbon carrier. This reaction serves as the major source of one-carbon groups required for the biosynthesis of purines, thymidylate, methionine, and other important biomolecules. Also exhibits THF-independent aldolase activity toward beta-hydroxyamino acids, producing glycine and aldehydes, via a retro-aldol mechanism. The sequence is that of Serine hydroxymethyltransferase from Lactobacillus gasseri (strain ATCC 33323 / DSM 20243 / BCRC 14619 / CIP 102991 / JCM 1131 / KCTC 3163 / NCIMB 11718 / NCTC 13722 / AM63).